The sequence spans 198 residues: Nucleoid occlusion factor SlmA (198 aa).

The region spanning 9 to 70 (RNRREEILQA…SLIEFIEDSL (62 aa)) is the HTH tetR-type domain. The segment at residues 33–52 (TTAKLAANVGVSEAALYRHF) is a DNA-binding region (H-T-H motif). The stretch at 119–144 (DRLQGRINQLYERIEVQLRQVLRERK) forms a coiled coil.

The protein belongs to the nucleoid occlusion factor SlmA family. In terms of assembly, homodimer. Interacts with FtsZ.

Its subcellular location is the cytoplasm. It localises to the nucleoid. In terms of biological role, required for nucleoid occlusion (NO) phenomenon, which prevents Z-ring formation and cell division over the nucleoid. Acts as a DNA-associated cell division inhibitor that binds simultaneously chromosomal DNA and FtsZ, and disrupts the assembly of FtsZ polymers. SlmA-DNA-binding sequences (SBS) are dispersed on non-Ter regions of the chromosome, preventing FtsZ polymerization at these regions. The polypeptide is Nucleoid occlusion factor SlmA (Sodalis glossinidius (strain morsitans)).